A 295-amino-acid polypeptide reads, in one-letter code: Putative aquaporin-12A (295 aa).

The chain crosses the membrane as a helical span at residues 1-21; it reads MAGLNVSLSFFFATFALCEAA. At 22–54 the chain is on the extracellular side; that stretch reads RRASKALLPVGAYEVFAREAMRTLVELGPWAGD. The chain crosses the membrane as a helical span at residues 55–75; the sequence is FGPDLLLTLLFLLFLAHGVTL. Topologically, residues 76–99 are cytoplasmic; the sequence is DGASANPTVSLQEFLMAEQSLPGT. Positions 77 to 114 form an intramembrane region, discontinuously helical; the sequence is GASANPTVSLQEFLMAEQSLPGTLLKLAAQGLGMQAAC. Residues 81-83 carry the NPA 1 motif; sequence NPT. A helical membrane pass occupies residues 100-126; sequence LLKLAAQGLGMQAACTLMRLCWAWELS. The Extracellular portion of the chain corresponds to 127-145; it reads DLHLLQSLMAQSCSSALRT. A helical membrane pass occupies residues 146–166; sequence SVPHGALVEAACAFCFHLTLL. Residues 167-178 are Cytoplasmic-facing; that stretch reads HLRHSPPAYSGP. A helical membrane pass occupies residues 179-199; the sequence is AVALLVTVTAYTAGPFTSAFF. Residues 195-206 constitute an intramembrane region (discontinuously helical); that stretch reads TSAFFNPALAAS. The short motif at 200–202 is the NPA 2 element; it reads NPA. Over 200–215 the chain is Extracellular; sequence NPALAASVTFACSGHT. Residues 216–236 form a helical membrane-spanning segment; the sequence is LLEYVQVYWLGPLTGMVLAVL. Residues 237 to 295 lie on the Cytoplasmic side of the membrane; the sequence is LHQGRLPHLFQRNLFYGQKNKYRAPRGKPAPASGDTQTPAKGSSVREPGRSGVEGPHSS. Positions 257 to 295 are disordered; that stretch reads KYRAPRGKPAPASGDTQTPAKGSSVREPGRSGVEGPHSS.

This sequence belongs to the MIP/aquaporin (TC 1.A.8) family. AQP11/AQP12 subfamily. As to quaternary structure, homotetramer; each monomer provides an independent water pore. As to expression, restricted to the pancreas.

It is found in the membrane. The catalysed reaction is H2O(in) = H2O(out). In terms of biological role, putative aquaporin. Could form homotetrameric transmembrane channels, with each monomer independently mediating water transport across the plasma membrane along its osmotic gradient. This Homo sapiens (Human) protein is Putative aquaporin-12A.